The sequence spans 311 residues: Olfactory receptor 6B1 (311 aa).

Topologically, residues 1–25 are extracellular; it reads MELENQTRVTKFILVGFPGSLSMRA. N-linked (GlcNAc...) asparagine glycosylation is present at asparagine 5. The chain crosses the membrane as a helical span at residues 26-46; it reads AMFLIFLVAYILTVAENVIII. Residues 47–54 lie on the Cytoplasmic side of the membrane; it reads LLVLQNRP. Residues 55–75 form a helical membrane-spanning segment; that stretch reads LHKPMYFFLANLSFLETWYIS. Over 76–99 the chain is Extracellular; the sequence is VTVPKLLFSFWSVNNSISFTLCMI. Cysteines 97 and 189 form a disulfide. Residues 100–120 form a helical membrane-spanning segment; the sequence is QLYFFIALMCTECVLLAAMAY. Residues 121–139 lie on the Cytoplasmic side of the membrane; it reads DRYVAICRPLHYPTIMSHG. The helical transmembrane segment at 140–160 threads the bilayer; sequence LCFRLALGSWAIGFGISLAKI. The Extracellular segment spans residues 161-196; sequence YFISCLSFCGPNVINHFFCDISPVLNLSCTDMSITE. A helical transmembrane segment spans residues 197 to 217; the sequence is LVDFILALVIFLFPLFITVLS. Residues 218–235 are Cytoplasmic-facing; sequence YGCILATILCMPTGKQKA. The chain crosses the membrane as a helical span at residues 236 to 256; sequence FSTCASHLVVVTIFYSAIIFM. The Extracellular segment spans residues 257-269; sequence YARPRVIHAFNMN. The helical transmembrane segment at 270–290 threads the bilayer; that stretch reads KIISIFYAIVTPSLNPFIYCL. Topologically, residues 291–311 are cytoplasmic; the sequence is RNREVKEALKKLAYCQASRSD.

The protein belongs to the G-protein coupled receptor 1 family.

Its subcellular location is the cell membrane. Its function is as follows. Odorant receptor. This Homo sapiens (Human) protein is Olfactory receptor 6B1 (OR6B1).